Reading from the N-terminus, the 277-residue chain is Large ribosomal subunit protein uL2 (277 aa).

2 disordered regions span residues 35-60 (EKQS…GHKQ) and 225-277 (MNPV…ANKR). Polar residues predominate over residues 43 to 53 (RNNNGHITTRH).

It belongs to the universal ribosomal protein uL2 family. As to quaternary structure, part of the 50S ribosomal subunit. Forms a bridge to the 30S subunit in the 70S ribosome.

One of the primary rRNA binding proteins. Required for association of the 30S and 50S subunits to form the 70S ribosome, for tRNA binding and peptide bond formation. It has been suggested to have peptidyltransferase activity; this is somewhat controversial. Makes several contacts with the 16S rRNA in the 70S ribosome. The protein is Large ribosomal subunit protein uL2 of Methylobacillus flagellatus (strain ATCC 51484 / DSM 6875 / VKM B-1610 / KT).